A 288-amino-acid polypeptide reads, in one-letter code: Shikimate dehydrogenase (NADP(+)) (288 aa).

Residues Ser14–Ser16 and Thr63 each bind shikimate. Lys67 serves as the catalytic Proton acceptor. An NADP(+)-binding site is contributed by Glu79. Shikimate-binding residues include Asn88 and Asp103. Residues Gly127–Ala131, Asn151–Lys156, and Met219 each bind NADP(+). Tyr221 serves as a coordination point for shikimate. Gly242 provides a ligand contact to NADP(+).

It belongs to the shikimate dehydrogenase family. In terms of assembly, homodimer.

It catalyses the reaction shikimate + NADP(+) = 3-dehydroshikimate + NADPH + H(+). It participates in metabolic intermediate biosynthesis; chorismate biosynthesis; chorismate from D-erythrose 4-phosphate and phosphoenolpyruvate: step 4/7. In terms of biological role, involved in the biosynthesis of the chorismate, which leads to the biosynthesis of aromatic amino acids. Catalyzes the reversible NADPH linked reduction of 3-dehydroshikimate (DHSA) to yield shikimate (SA). This Caldicellulosiruptor bescii (strain ATCC BAA-1888 / DSM 6725 / KCTC 15123 / Z-1320) (Anaerocellum thermophilum) protein is Shikimate dehydrogenase (NADP(+)).